A 479-amino-acid chain; its full sequence is NADH-quinone oxidoreductase subunit N 2 (479 aa).

Helical transmembrane passes span F4–T24, G43–Y63, A67–S87, P99–I119, V121–M141, I159–L179, A201–F221, L239–A259, A267–V287, L294–D314, F318–V338, L364–F384, A401–V421, and A444–I464.

Belongs to the complex I subunit 2 family. As to quaternary structure, NDH-1 is composed of 14 different subunits. Subunits NuoA, H, J, K, L, M, N constitute the membrane sector of the complex.

It is found in the cell inner membrane. It carries out the reaction a quinone + NADH + 5 H(+)(in) = a quinol + NAD(+) + 4 H(+)(out). Functionally, NDH-1 shuttles electrons from NADH, via FMN and iron-sulfur (Fe-S) centers, to quinones in the respiratory chain. The immediate electron acceptor for the enzyme in this species is believed to be ubiquinone. Couples the redox reaction to proton translocation (for every two electrons transferred, four hydrogen ions are translocated across the cytoplasmic membrane), and thus conserves the redox energy in a proton gradient. In Opitutus terrae (strain DSM 11246 / JCM 15787 / PB90-1), this protein is NADH-quinone oxidoreductase subunit N 2.